We begin with the raw amino-acid sequence, 316 residues long: MNFQQLKIIREAARQDYNLTEVANMLYTSQSGVSRHIRELEEELGIEIFIRRGKRLLGMTEPGKALLSIAERILNEASNVRRLADLFTNDASGVLTIATTHTQARYSLPPVIKAFRELFSDVRVELVQGTPQEIEALLHNGGADIGIASERLSNDPTLAAFPWFRWHHSLLVPKDHPLTQVSPLTLEAIARWPLITYRQGITGRSRIDEAFNRKGLMPDIVLSAQDSDVIKTYVELGLGVGLVAEQSGDAREADTFTRLDTRHLFDANTVWLGLKRGQLQRNYVWRFIELCNAGLSLDEIKRQAMEPEEVAIDYQI.

The HTH lysR-type domain occupies 1–59 (MNFQQLKIIREAARQDYNLTEVANMLYTSQSGVSRHIRELEEELGIEIFIRRGKRLLGM). Positions 19–38 (LTEVANMLYTSQSGVSRHIR) form a DNA-binding region, H-T-H motif.

Belongs to the LysR transcriptional regulatory family.

May be an accessory regulatory protein within the cys regulon. The protein is HTH-type transcriptional regulator cbl (cbl) of Klebsiella aerogenes (Enterobacter aerogenes).